A 139-amino-acid chain; its full sequence is Holo-[acyl-carrier-protein] synthase (139 aa).

Mg(2+) is bound by residues aspartate 9 and glutamate 63.

This sequence belongs to the P-Pant transferase superfamily. AcpS family. Requires Mg(2+) as cofactor.

It localises to the cytoplasm. The enzyme catalyses apo-[ACP] + CoA = holo-[ACP] + adenosine 3',5'-bisphosphate + H(+). In terms of biological role, transfers the 4'-phosphopantetheine moiety from coenzyme A to a Ser of acyl-carrier-protein. This is Holo-[acyl-carrier-protein] synthase from Wigglesworthia glossinidia brevipalpis.